Reading from the N-terminus, the 99-residue chain is Putative protein tag-209 (99 aa).

Residues 1–16 (MLKLLAFVALLSVSVS) form the signal peptide.

This is Putative protein tag-209 (tag-209) from Caenorhabditis elegans.